The primary structure comprises 142 residues: Transcriptional regulator MraZ (142 aa).

2 SpoVT-AbrB domains span residues A5 to V51 and A77 to R120.

Belongs to the MraZ family. In terms of assembly, forms oligomers.

It is found in the cytoplasm. Its subcellular location is the nucleoid. This is Transcriptional regulator MraZ from Herminiimonas arsenicoxydans.